Consider the following 361-residue polypeptide: Elongator complex protein 4 (361 aa).

Disordered regions lie at residues 93–124 (QLPGDSDRPNKNENSAGEDNHSSPPSKNPQQE) and 338–361 (DDEQKDTKISNTNPQKQPVKSLDF). Composition is skewed to polar residues over residues 104–121 (NENSAGEDNHSSPPSKNP) and 346–355 (ISNTNPQKQP).

It belongs to the ELP4 family. In terms of assembly, component of the elongator complex.

It localises to the cytoplasm. It is found in the nucleus. It participates in tRNA modification; 5-methoxycarbonylmethyl-2-thiouridine-tRNA biosynthesis. Functionally, component of the elongator complex, a multiprotein complex which is required for multiple tRNA modifications, including mcm5U (5-methoxycarbonylmethyl uridine), mcm5s2U (5-methoxycarbonylmethyl-2-thiouridine), and ncm5U (5-carbamoylmethyl uridine). The elongator complex catalyzes formation of carboxymethyluridine in the wobble base at position 34 in tRNAs. The chain is Elongator complex protein 4 from Schizosaccharomyces pombe (strain 972 / ATCC 24843) (Fission yeast).